We begin with the raw amino-acid sequence, 364 residues long: Phospho-N-acetylmuramoyl-pentapeptide-transferase (364 aa).

The next 10 helical transmembrane spans lie at 18 to 38 (SLLI…AQIL), 48 to 68 (LFPL…VVPV), 91 to 111 (GTPT…ALIW), 114 to 134 (LDPA…IGWI), 154 to 174 (LILQ…TQSA), 183 to 203 (GQII…VLVA), 214 to 234 (VDGL…ALMA), 237 to 257 (NPGL…FIVH), 280 to 300 (AIGI…IFFV), and 343 to 363 (TQIV…AVIS).

Belongs to the glycosyltransferase 4 family. MraY subfamily. Mg(2+) is required as a cofactor.

It localises to the cell inner membrane. The catalysed reaction is UDP-N-acetyl-alpha-D-muramoyl-L-alanyl-gamma-D-glutamyl-meso-2,6-diaminopimeloyl-D-alanyl-D-alanine + di-trans,octa-cis-undecaprenyl phosphate = di-trans,octa-cis-undecaprenyl diphospho-N-acetyl-alpha-D-muramoyl-L-alanyl-D-glutamyl-meso-2,6-diaminopimeloyl-D-alanyl-D-alanine + UMP. It participates in cell wall biogenesis; peptidoglycan biosynthesis. Functionally, catalyzes the initial step of the lipid cycle reactions in the biosynthesis of the cell wall peptidoglycan: transfers peptidoglycan precursor phospho-MurNAc-pentapeptide from UDP-MurNAc-pentapeptide onto the lipid carrier undecaprenyl phosphate, yielding undecaprenyl-pyrophosphoryl-MurNAc-pentapeptide, known as lipid I. This chain is Phospho-N-acetylmuramoyl-pentapeptide-transferase, found in Rippkaea orientalis (strain PCC 8801 / RF-1) (Cyanothece sp. (strain PCC 8801)).